The chain runs to 452 residues: Serine incorporator 2 (452 aa).

The next 11 membrane-spanning stretches (helical) occupy residues 5–25, 41–61, 96–116, 131–151, 158–178, 205–225, 236–256, 266–286, 319–339, 387–407, and 426–446; these read LGAC…PCIL, FFTV…SPGV, AVYR…LLMV, GFWF…FYIP, IWFY…LLLL, LFFF…LLFV, GKVF…VAIL, SGLL…WLAL, WDAP…FISL, FFHL…TNWY, and ICAS…PLLL.

The protein belongs to the TDE1 family.

It is found in the cell membrane. It carries out the reaction a 1,2-diacyl-sn-glycero-3-phospho-L-serine(in) = a 1,2-diacyl-sn-glycero-3-phospho-L-serine(out). It catalyses the reaction a 1,2-diacyl-sn-glycero-3-phosphocholine(in) = a 1,2-diacyl-sn-glycero-3-phosphocholine(out). The enzyme catalyses a 1,2-diacyl-sn-glycero-3-phosphoethanolamine(in) = a 1,2-diacyl-sn-glycero-3-phosphoethanolamine(out). Its function is as follows. Non-ATP-dependent, non-specific lipid transporter for phosphatidylserine, phosphatidylcholine, and phosphatidylethanolamine. Functions as a scramblase that flips lipids in both directions across the membrane. In contrast to SERINC3 and SERINC5, has no effect on gammaretrovirus particles infectivity. The sequence is that of Serine incorporator 2 (SERINC2) from Bos taurus (Bovine).